The sequence spans 263 residues: MVVRLQNGLMGKVYLVGAGPGDPGLITVKGKTLLENAEAVVYDALVSTAILAMVNPQAELIDAGKRRGRHTKLQSETTQLLAQLAEKHAVVVRLKGGDPFIFGRGGEEMEDLVKAGIEVEVVPGITAGIAAPAYAQIPLTHRAYSSSVTFVTGHESAGKYRPEVNWAAIAKGSETIVIYMGVYSLATILPQLMLAGLGEDTPIALIRWGTCPEQQKLVGTFATILAQIEVENFQAPAIVVIGAVVNYPANLRQQLAPILGGVN.

Residues P20, 96–98 (GGD), 126–127 (TA), M180, and A237 contribute to the S-adenosyl-L-homocysteine site.

This sequence belongs to the precorrin methyltransferase family.

The enzyme catalyses uroporphyrinogen III + 2 S-adenosyl-L-methionine = precorrin-2 + 2 S-adenosyl-L-homocysteine + H(+). Its pathway is cofactor biosynthesis; adenosylcobalamin biosynthesis; precorrin-2 from uroporphyrinogen III: step 1/1. The protein operates within porphyrin-containing compound metabolism; siroheme biosynthesis; precorrin-2 from uroporphyrinogen III: step 1/1. Its function is as follows. Catalyzes the two successive C-2 and C-7 methylation reactions involved in the conversion of uroporphyrinogen III to precorrin-2 via the intermediate formation of precorrin-1. It is a step in the biosynthesis of both cobalamin (vitamin B12) and siroheme. This is Uroporphyrinogen-III C-methyltransferase (cobA) from Synechocystis sp. (strain ATCC 27184 / PCC 6803 / Kazusa).